The primary structure comprises 231 residues: LexA repressor (231 aa).

The H-T-H motif DNA-binding region spans 26–46 (FEEMKEALDLKSKSGIHRLIG). Active-site for autocatalytic cleavage activity residues include Ser152 and Lys190.

Belongs to the peptidase S24 family. In terms of assembly, homodimer.

It carries out the reaction Hydrolysis of Ala-|-Gly bond in repressor LexA.. In terms of biological role, represses a number of genes involved in the response to DNA damage (SOS response), including recA and lexA. In the presence of single-stranded DNA, RecA interacts with LexA causing an autocatalytic cleavage which disrupts the DNA-binding part of LexA, leading to derepression of the SOS regulon and eventually DNA repair. This is LexA repressor from Acidiphilium cryptum (strain JF-5).